Consider the following 254-residue polypeptide: MLDFKGKNAVITGGSRGIGRAIALGLAKQGANILISYASHDSEADEVLETASKYGVKAHKVKVDQSDPYESIRFAEKAIETFGKVHILVDNAGICPFEDFFRISVDLFEKVWKVNVESHYFITQRIAKNMIENKINGRILLISSISAHVGGEFQTHYTTTKSALNGFMHSIAIVLGKYGILVNSLEPGTILTDINKEDLSNQEKRAYMERRTVVGRLGLPEDMVAPALFLLSDDNTYVTGTELLADGGMLINLQ.

Residues glycine 13, serine 15, arginine 16, isoleucine 18, aspartate 64, and asparagine 91 each contribute to the NADP(+) site. Serine 144 (proton donor) is an active-site residue. Serine 144, serine 146, glutamine 154, and tyrosine 157 together coordinate beta-L-rhamnose. 2 residues coordinate NADP(+): tyrosine 157 and lysine 161. The Proton acceptor role is filled by tyrosine 157. Catalysis depends on lysine 161, which acts as the Lowers pKa of active site Tyr. A beta-L-rhamnose-binding site is contributed by threonine 189. Isoleucine 190 lines the NADP(+) pocket. Beta-L-rhamnose is bound at residue asparagine 195.

This sequence belongs to the short-chain dehydrogenases/reductases (SDR) family.

The catalysed reaction is L-rhamnofuranose + NADP(+) = L-rhamnono-1,4-lactone + NADPH + H(+). The protein operates within carbohydrate degradation; L-rhamnose degradation. In terms of biological role, involved in the non-phosphorylated metabolic pathway of L-rhamnose catabolism. Catalyzes the oxidation of L-rhamnose to yield L-rhamnono-1,4-lactone. It can also oxidize L-lyxose and L-mannose, and uses only NADP. This is L-rhamnose 1-dehydrogenase (NADP(+)) from Thermoplasma acidophilum (strain ATCC 25905 / DSM 1728 / JCM 9062 / NBRC 15155 / AMRC-C165).